The chain runs to 251 residues: Coproheme decarboxylase (251 aa).

Fe-coproporphyrin III-binding positions include Arg133, 147-151 (YPMSK), His174, Gln187, and Ser225. The active site involves Tyr147.

The protein belongs to the ChdC family. Type 1 subfamily. In terms of assembly, homopentamer. Homohexamer in solution. It depends on Fe-coproporphyrin III as a cofactor.

The enzyme catalyses Fe-coproporphyrin III + 2 H2O2 + 2 H(+) = heme b + 2 CO2 + 4 H2O. It carries out the reaction Fe-coproporphyrin III + H2O2 + H(+) = harderoheme III + CO2 + 2 H2O. It catalyses the reaction harderoheme III + H2O2 + H(+) = heme b + CO2 + 2 H2O. It functions in the pathway porphyrin-containing compound metabolism; protoheme biosynthesis. Functionally, involved in coproporphyrin-dependent heme b biosynthesis. Catalyzes the decarboxylation of Fe-coproporphyrin III (coproheme) to heme b (protoheme IX), the last step of the pathway. The reaction occurs in a stepwise manner with a three-propionate intermediate. The polypeptide is Coproheme decarboxylase (Listeria monocytogenes serovar 1/2a (strain ATCC BAA-679 / EGD-e)).